We begin with the raw amino-acid sequence, 157 residues long: Small ribosomal subunit protein uS7 (157 aa).

This sequence belongs to the universal ribosomal protein uS7 family. In terms of assembly, part of the 30S ribosomal subunit. Contacts proteins S9 and S11.

One of the primary rRNA binding proteins, it binds directly to 16S rRNA where it nucleates assembly of the head domain of the 30S subunit. Is located at the subunit interface close to the decoding center, probably blocks exit of the E-site tRNA. This chain is Small ribosomal subunit protein uS7, found in Salinibacter ruber (strain DSM 13855 / M31).